Here is a 179-residue protein sequence, read N- to C-terminus: Large ribosomal subunit protein uL5 (179 aa).

This sequence belongs to the universal ribosomal protein uL5 family. Part of the 50S ribosomal subunit; part of the 5S rRNA/L5/L18/L25 subcomplex. Contacts the 5S rRNA and the P site tRNA. Forms a bridge to the 30S subunit in the 70S ribosome.

Functionally, this is one of the proteins that bind and probably mediate the attachment of the 5S RNA into the large ribosomal subunit, where it forms part of the central protuberance. In the 70S ribosome it contacts protein S13 of the 30S subunit (bridge B1b), connecting the 2 subunits; this bridge is implicated in subunit movement. Contacts the P site tRNA; the 5S rRNA and some of its associated proteins might help stabilize positioning of ribosome-bound tRNAs. In Nitrosomonas europaea (strain ATCC 19718 / CIP 103999 / KCTC 2705 / NBRC 14298), this protein is Large ribosomal subunit protein uL5.